Here is a 518-residue protein sequence, read N- to C-terminus: Receptor-interacting serine/threonine-protein kinase 3 (518 aa).

Residue serine 2 is modified to Phosphoserine. A Protein kinase domain is found at 21 to 287 (LENQELVGKG…ECLPKTDEVF (267 aa)). An ATP-binding site is contributed by 27–35 (VGKGGFGTV). Lysine 42 is covalently cross-linked (Glycyl lysine isopeptide (Lys-Gly) (interchain with G-Cter in ubiquitin)). Lysine 50 is an ATP binding site. The Proton acceptor role is filled by aspartate 142. Position 164 is a phosphoserine (serine 164). Threonine 182 is subject to Phosphothreonine. Phosphoserine; by autocatalysis is present on residues serine 199 and serine 227. Threonine 252 is subject to Phosphothreonine. Serine 299 is subject to Phosphoserine. Threonine 333 is subject to Phosphothreonine. Residues lysine 351 and lysine 363 each participate in a glycyl lysine isopeptide (Lys-Gly) (interchain with G-Cter in ubiquitin) cross-link. Positions 355–443 (EEPPSSVPKK…WSCRTPEPNP (89 aa)) are disordered. Positions 384-408 (TAGTSSDSMAQPPQTPETSTFRNQM) are enriched in polar residues. Serine 389 bears the Phosphoserine mark. At threonine 401 the chain carries Phosphothreonine. Residues 450 to 466 (VNIYNCSGVQVGDNNYL) carry the RIP homotypic interaction motif (RHIM) motif. Residues 476–518 (TWGLAPSGKGRGLQHPPPVGSQEGPKDPEAWSRPQGWYNHSGK) are disordered. Lysine 518 is covalently cross-linked (Glycyl lysine isopeptide (Lys-Gly) (interchain with G-Cter in ubiquitin)).

The protein belongs to the protein kinase superfamily. TKL Ser/Thr protein kinase family. As to quaternary structure, interacts (via RIP homotypic interaction motif) with RIPK1 (via RIP homotypic interaction motif); this interaction induces RIPK1 phosphorylation and formation of a RIPK1-RIPK3 necrosis-inducing complex. Interacts with MLKL; the interaction is direct and triggers necroptosis. Interacts with ZBP1 (via RIP homotypic interaction motif); interaction with ZBP1 activates RIPK3, triggering necroptosis. Upon TNF-induced necrosis, the RIPK1-RIPK3 dimer further interacts with PGAM5 and MLKL; the formation of this complex leads to PGAM5 phosphorylation and increase in PGAM5 phosphatase activity. Binds TRAF2 and is recruited to the TNFR-1 signaling complex. Interacts with PYGL, GLUL and GLUD1; these interactions result in activation of these metabolic enzymes. Interacts with BIRC2/c-IAP1, BIRC3/c-IAP2 and XIAP/BIRC4. Interacts with ARHGEF2. Interacts with PELI1 (via atypical FHA domain); the phosphorylated form at Thr-182 binds preferentially to PELI1. Interacts with BUB1B, TRAF2 and STUB1. Interacts with CASP6. Component of the AIM2 PANoptosome complex, a multiprotein complex that drives inflammatory cell death (PANoptosis). In terms of assembly, (Microbial infection) Interacts (via RIP homotypic interaction motif/RHIM) with herpes simplex virus 1/HHV-1 protein RIR1/ICP6 (via RHIM); this interaction may induce heteromeric amyloid assemblies and prevent necroptosis activation. (Microbial infection) Interacts (via RIP homotypic interaction motif/RHIM) with herpes simplex virus 2/HHV-2 protein RIR1/ICP10 (via RHIM); this interaction prevents necroptosis activation. (Microbial infection) Proteolytically cleaved by S.flexneri OspD3 within the RIP homotypic interaction motif (RHIM), leading to its degradation and inhibition of necroptosis. Post-translationally, RIPK1 and RIPK3 undergo reciprocal auto- and trans-phosphorylation. Autophosphorylated following interaction with ZBP1. Phosphorylation of Ser-199 plays a role in the necroptotic function of RIPK3. Autophosphorylates at Ser-227 following activation by ZBP1: phosphorylation at these sites is a hallmark of necroptosis and is required for binding MLKL. Phosphorylation at Thr-182 is important for its kinase activity, interaction with PELI1 and PELI1-mediated 'Lys-48'-linked polyubiquitination and for its ability to mediate TNF-induced necroptosis. In terms of processing, polyubiquitinated with 'Lys-48' and 'Lys-63'-linked chains by BIRC2/c-IAP1 and BIRC3/c-IAP2, leading to activation of NF-kappa-B. Polyubiquitinated with 'Lys-48'-linked chains by PELI1 leading to its subsequent proteasome-dependent degradation. Ubiquitinated by STUB1 leading to its subsequent proteasome-dependent degradation. Deubiquitinated by USP22. In terms of tissue distribution, highly expressed in the pancreas. Detected at lower levels in heart, placenta, lung and kidney. As to expression, expression is significantly increased in colon and lung cancers.

Its subcellular location is the cytoplasm. The protein resides in the cytosol. It localises to the nucleus. It catalyses the reaction L-seryl-[protein] + ATP = O-phospho-L-seryl-[protein] + ADP + H(+). The enzyme catalyses L-threonyl-[protein] + ATP = O-phospho-L-threonyl-[protein] + ADP + H(+). Its activity is regulated as follows. Activity is stimulated by ZBP1, which senses double-stranded Z-RNA structures. RIPK3-dependent necroptosis is inhibited by RIPK1: RIPK1 prevents the ZBP1-induced activation of RIPK3 via FADD-mediated recruitment of CASP8, which cleaves RIPK1 and limits TNF-induced necroptosis. Serine/threonine-protein kinase that activates necroptosis and apoptosis, two parallel forms of cell death. Necroptosis, a programmed cell death process in response to death-inducing TNF-alpha family members, is triggered by RIPK3 following activation by ZBP1. Activated RIPK3 forms a necrosis-inducing complex and mediates phosphorylation of MLKL, promoting MLKL localization to the plasma membrane and execution of programmed necrosis characterized by calcium influx and plasma membrane damage. In addition to TNF-induced necroptosis, necroptosis can also take place in the nucleus in response to orthomyxoviruses infection: following ZBP1 activation, which senses double-stranded Z-RNA structures, nuclear RIPK3 catalyzes phosphorylation and activation of MLKL, promoting disruption of the nuclear envelope and leakage of cellular DNA into the cytosol. Also regulates apoptosis: apoptosis depends on RIPK1, FADD and CASP8, and is independent of MLKL and RIPK3 kinase activity. Phosphorylates RIPK1: RIPK1 and RIPK3 undergo reciprocal auto- and trans-phosphorylation. In some cell types, also able to restrict viral replication by promoting cell death-independent responses. In response to Zika virus infection in neurons, promotes a cell death-independent pathway that restricts viral replication: together with ZBP1, promotes a death-independent transcriptional program that modifies the cellular metabolism via up-regulation expression of the enzyme ACOD1/IRG1 and production of the metabolite itaconate. Itaconate inhibits the activity of succinate dehydrogenase, generating a metabolic state in neurons that suppresses replication of viral genomes. RIPK3 binds to and enhances the activity of three metabolic enzymes: GLUL, GLUD1, and PYGL. These metabolic enzymes may eventually stimulate the tricarboxylic acid cycle and oxidative phosphorylation, which could result in enhanced ROS production. Its function is as follows. (Microbial infection) In case of herpes simplex virus 1/HHV-1 infection, forms heteromeric amyloid structures with HHV-1 protein RIR1/ICP6 which may inhibit RIPK3-mediated necroptosis, thereby preventing host cell death pathway and allowing viral evasion. The chain is Receptor-interacting serine/threonine-protein kinase 3 from Homo sapiens (Human).